A 1868-amino-acid polypeptide reads, in one-letter code: Inactive histone-lysine N-methyltransferase 2E (1868 aa).

The HCFC1-binding motif (HBM) signature appears at 63-66; sequence DHNY. Residues 118–166 form a PHD-type zinc finger; it reads VTRCICGFTHDDGYMICCDKCSVWQHIDCMGIDRQHIPDTYLCERCQPR. Zn(2+) contacts are provided by C121, C123, C135, C138, H143, C146, C160, and C163. Disordered regions lie at residues 178 to 197, 217 to 268, and 308 to 329; these read RRKRENMSDGDTSATESGDE, ASRV…SSDS, and GSGNDSKDMNKSELSTNNSLFR. The SET domain maps to 330–447; the sequence is PPVESHIQKN…KGTEITIAFD (118 aa). The O-linked (GlcNAc) serine glycan is linked to S435. A glycan (O-linked (GlcNAc) threonine) is linked at T440. Residues 472-504 are disordered; the sequence is KRSSESTENINSGYETRRKKGKKEKDTSKEKDI. A compositionally biased stretch (basic and acidic residues) spans 494-504; it reads KEKDTSKEKDI. A coiled-coil region spans residues 559–613; that stretch reads VEMESEEQIAERKRKMTREERKMEAILQAFARLEKREKRREQALERISTAKTEVK. The segment covering 646–670 has biased composition (basic residues); it reads NRTKQRKSFSRSRTHIGQQRRRHRT. The interval 646–682 is disordered; sequence NRTKQRKSFSRSRTHIGQQRRRHRTVSMCSDIPPSSP. 2 positions are modified to phosphoserine: S837 and S845. The segment covering 884-908 has biased composition (low complexity); the sequence is YSESSTPTPSPYATPTHTDITPTDP. 2 disordered regions span residues 884-924 and 1038-1068; these read YSES…ETYR and SMETPAHDRTEPSNQLDSTHSGRGTMYSSWV. The span at 1049–1068 shows a compositional bias: polar residues; that stretch reads PSNQLDSTHSGRGTMYSSWV. Position 1070 is a phosphoserine (S1070). Disordered stretches follow at residues 1165–1222, 1236–1315, 1334–1565, and 1585–1842; these read KRQR…PPPA, SSEE…SNHI, PDAE…QNQQ, and VFTS…QASP. Over residues 1184 to 1197 the composition is skewed to low complexity; the sequence is SVSPHPSGSLSSSG. Positions 1203 to 1213 are enriched in polar residues; sequence SSENGEQAENQ. S1282 is modified (phosphoserine). Residues 1282–1291 show a composition bias toward basic and acidic residues; sequence SDHRKDKDSG. Low complexity-rich tracts occupy residues 1294-1312 and 1348-1363; these read SPCVSCSPSHVQSPPSSHS and PSPDTSQSPSKTSKPG. Phosphoserine is present on S1364. Composition is skewed to polar residues over residues 1389-1421, 1451-1463, and 1488-1498; these read ATVSEADNSVHQNPEPQHRQLSSNTPALSQNHA, HTENPPKSSTPHT, and SQSPQVGTPQR. A compositionally biased stretch (low complexity) spans 1506–1518; sequence AAAQNLQANPQQA. The segment covering 1519-1547 has biased composition (polar residues); the sequence is TSGALFTQTPSGQSSATYSQFNQQSLNST. Residues 1548-1558 are compositionally biased toward pro residues; sequence APPPPPPPPPS. Positions 1585-1603 are enriched in polar residues; the sequence is VFTSGPNQALPGSTSQQSV. The span at 1631-1642 shows a compositional bias: pro residues; sequence VPPPPPPPPAPG. A compositionally biased stretch (polar residues) spans 1647-1656; that stretch reads QQPSSHQQHS. Over residues 1682–1692 the composition is skewed to pro residues; sequence LPPPPPPPGPA. Over residues 1706–1716 the composition is skewed to polar residues; it reads QSLQAQHQHVV. A compositionally biased stretch (pro residues) spans 1719–1732; it reads APPPPPPPPPPPPA. Polar residues predominate over residues 1806-1816; sequence QGPNSIPTPTA.

This sequence belongs to the class V-like SAM-binding methyltransferase superfamily. Histone-lysine methyltransferase family. TRX/MLL subfamily. Component of a complex composed of KMT2E, OGT and USP7; the complex stabilizes KMT2E, preventing KMT2E ubiquitination and proteasomal-mediated degradation. Interacts (via N-terminus) with OGT (via TRP repeats). Interacts with deubiquitinating enzyme USP7 (via MATH domain). Interacts (via HBM motif) with HCFC1 (via Kelch domain). Interacts with E2F1; the interaction is probably indirect and is mediated via HCFC1. In terms of processing, ubiquitinated. Deubiquitinated by USP7. O-glycosylated at Ser-435 and Thr-440 in the SET domain by OGT which probably prevents KMT2E proteasomal-mediated degradation.

The protein resides in the chromosome. It is found in the cytoplasm. The protein localises to the cytoskeleton. It localises to the microtubule organizing center. Its subcellular location is the centrosome. The protein resides in the nucleus speckle. In terms of biological role, associates with chromatin regions downstream of transcriptional start sites of active genes and thus regulates gene transcription. Chromatin interaction is mediated via the binding to tri-methylated histone H3 at 'Lys-4' (H3K4me3). Key regulator of hematopoiesis involved in terminal myeloid differentiation and in the regulation of hematopoietic stem cell (HSCs) self-renewal by a mechanism that involves DNA methylation. Also acts as an important cell cycle regulator, participating in cell cycle regulatory network machinery at multiple cell cycle stages including G1/S transition, S phase progression and mitotic entry. Recruited to E2F1 responsive promoters by HCFC1 where it stimulates tri-methylation of histone H3 at 'Lys-4' and transcriptional activation and thereby facilitates G1 to S phase transition. During myoblast differentiation, required to suppress inappropriate expression of S-phase-promoting genes and maintain expression of determination genes in quiescent cells. This chain is Inactive histone-lysine N-methyltransferase 2E (Kmt2e), found in Mus musculus (Mouse).